The sequence spans 218 residues: MKKLINQFIYIDENNPRVLMEPGIFIAVKLINLFIQTYISNAKITYSNDELIGKMGCSRSGLYDAFRVLEREGLIKRIYSDTKKRNRTEIEFNIDLAASWLKLTIYDKAYKNAPKRSLLRAVVSQTMIIIKDTKERILEAVGVRKSKDRKQRIEQIVKETERNYNRYVKHLKQRKIKQDKINATRKESILRHHLILGSIDWIKSLGMEPNPPDTLKIA.

This is an uncharacterized protein from Acholeplasma phage L2 (Bacteriophage L2).